We begin with the raw amino-acid sequence, 185 residues long: Photosystem I assembly protein Ycf4 (185 aa).

Transmembrane regions (helical) follow at residues 24–44 (YIIG…SISS) and 58–78 (ALLF…ANLL).

Belongs to the Ycf4 family.

It localises to the cellular thylakoid membrane. Functionally, seems to be required for the assembly of the photosystem I complex. The sequence is that of Photosystem I assembly protein Ycf4 from Prochlorococcus marinus (strain MIT 9215).